The following is a 190-amino-acid chain: Ribosome maturation factor RimM (190 aa).

Positions 114-190 constitute a PRC barrel domain; that stretch reads DDEYYWVDLI…CITVDWQPDY (77 aa).

Belongs to the RimM family. As to quaternary structure, binds ribosomal protein uS19.

The protein localises to the cytoplasm. An accessory protein needed during the final step in the assembly of 30S ribosomal subunit, possibly for assembly of the head region. Essential for efficient processing of 16S rRNA. May be needed both before and after RbfA during the maturation of 16S rRNA. It has affinity for free ribosomal 30S subunits but not for 70S ribosomes. This chain is Ribosome maturation factor RimM, found in Acidovorax sp. (strain JS42).